A 93-amino-acid chain; its full sequence is Small ribosomal subunit protein bS20c (93 aa).

Belongs to the bacterial ribosomal protein bS20 family.

Its subcellular location is the plastid. The protein resides in the chloroplast. Its function is as follows. Binds directly to 16S ribosomal RNA. The chain is Small ribosomal subunit protein bS20c from Phaeodactylum tricornutum (strain CCAP 1055/1).